The following is a 353-amino-acid chain: Photosystem II D2 protein (353 aa).

Threonine 2 carries the N-acetylthreonine modification. The residue at position 2 (threonine 2) is a Phosphothreonine. The chain crosses the membrane as a helical span at residues 41 to 61; it reads CAYFALGGWLTGTTFVTSWYT. Histidine 118 contributes to the chlorophyll a binding site. Residues 125–141 form a helical membrane-spanning segment; the sequence is GFMLRQFEIARSVQLRP. The pheophytin a site is built by glutamine 130 and asparagine 143. Residues 153-166 traverse the membrane as a helical segment; sequence VFVSVFLIYPLGQS. Histidine 198 serves as a coordination point for chlorophyll a. A helical membrane pass occupies residues 208–228; that stretch reads AALLCAIHGATVENTIFEDGD. The a plastoquinone site is built by histidine 215 and phenylalanine 262. Histidine 215 is a Fe cation binding site. Residue histidine 269 coordinates Fe cation. Residues 279 to 295 form a helical membrane-spanning segment; sequence GLWMSAVGVVGLAVNLR.

It belongs to the reaction center PufL/M/PsbA/D family. As to quaternary structure, PSII is composed of 1 copy each of membrane proteins PsbA, PsbB, PsbC, PsbD, PsbE, PsbF, PsbH, PsbI, PsbJ, PsbK, PsbL, PsbM, PsbT, PsbX, PsbY, PsbZ, Psb30/Ycf12, at least 3 peripheral proteins of the oxygen-evolving complex and a large number of cofactors. It forms dimeric complexes. The cofactor is The D1/D2 heterodimer binds P680, chlorophylls that are the primary electron donor of PSII, and subsequent electron acceptors. It shares a non-heme iron and each subunit binds pheophytin, quinone, additional chlorophylls, carotenoids and lipids. There is also a Cl(-1) ion associated with D1 and D2, which is required for oxygen evolution. The PSII complex binds additional chlorophylls, carotenoids and specific lipids..

The protein localises to the plastid. The protein resides in the chloroplast thylakoid membrane. The catalysed reaction is 2 a plastoquinone + 4 hnu + 2 H2O = 2 a plastoquinol + O2. Photosystem II (PSII) is a light-driven water:plastoquinone oxidoreductase that uses light energy to abstract electrons from H(2)O, generating O(2) and a proton gradient subsequently used for ATP formation. It consists of a core antenna complex that captures photons, and an electron transfer chain that converts photonic excitation into a charge separation. The D1/D2 (PsbA/PsbD) reaction center heterodimer binds P680, the primary electron donor of PSII as well as several subsequent electron acceptors. D2 is needed for assembly of a stable PSII complex. The sequence is that of Photosystem II D2 protein from Chaetosphaeridium globosum (Charophycean green alga).